The chain runs to 130 residues: Small ribosomal subunit protein uS8x (130 aa).

Belongs to the universal ribosomal protein uS8 family.

The polypeptide is Small ribosomal subunit protein uS8x (RPS15AD) (Arabidopsis thaliana (Mouse-ear cress)).